Consider the following 219-residue polypeptide: Small ribosomal subunit protein uS3c (219 aa).

One can recognise a KH type-2 domain in the interval 39–118 (IRSFIRKYIQ…RLNIVITKVE (80 aa)).

This sequence belongs to the universal ribosomal protein uS3 family. In terms of assembly, part of the 30S ribosomal subunit.

Its subcellular location is the plastid. The sequence is that of Small ribosomal subunit protein uS3c (rps3) from Cuscuta obtusiflora (Peruvian dodder).